Reading from the N-terminus, the 217-residue chain is Fucoxanthin-chlorophyll a-c binding protein B, chloroplastic (217 aa).

Residues 1–39 (MKSAVMAVACAAAPGFRGPSAFNGAALTTSAKACSAMKM) constitute a chloroplast transit peptide. A run of 3 helical transmembrane segments spans residues 81–101 (IAML…PGML), 122–142 (IPPA…LAVM), and 183–203 (GRAA…NNKP).

The protein belongs to the fucoxanthin chlorophyll protein family. In terms of assembly, the LHC complex of chromophytic algae is composed of fucoxanthin, chlorophyll A and C bound non-covalently by fucoxanthin chlorophyll proteins (FCPs). The ratio of pigments in this LHC is; fucoxanthin: chlorophyll C: chlorophyll A; (0.6-1): (0.1-0.3): (1).

It localises to the plastid. The protein localises to the chloroplast thylakoid membrane. Its function is as follows. The light-harvesting complex (LHC) functions as a light receptor, it captures and delivers excitation energy to photosystems with which it is closely associated. Energy is transferred from the carotenoid and chlorophyll C (or B) to chlorophyll A and the photosynthetic reaction centers where it is used to synthesize ATP and reducing power. The protein is Fucoxanthin-chlorophyll a-c binding protein B, chloroplastic (FCPB) of Macrocystis pyrifera (Giant kelp).